Reading from the N-terminus, the 65-residue chain is Large ribosomal subunit protein bL35 (65 aa).

Belongs to the bacterial ribosomal protein bL35 family.

In Paraburkholderia phytofirmans (strain DSM 17436 / LMG 22146 / PsJN) (Burkholderia phytofirmans), this protein is Large ribosomal subunit protein bL35.